Consider the following 387-residue polypeptide: EARP-interacting protein homolog (387 aa).

4 WD repeats span residues 132-172 (SAHG…AKAT), 182-222 (KGQL…QIYC), 226-266 (AHGQ…EPVK), and 270-310 (EHSH…SEPF). The interval 309-337 (PFGHLVDDDDLSDPEENQQEDKGKEPLQD) is disordered. Residues 315–326 (DDDDLSDPEENQ) show a composition bias toward acidic residues. The WD 5 repeat unit spans residues 345–385 (EHEDSVYAVEWSAADPWLFASLSYDGRLVINRVPRALKYRI).

The protein belongs to the WD repeat EIPR1 family.

It is found in the golgi apparatus. The protein resides in the trans-Golgi network. Its function is as follows. May act as a component of endosomal retrieval machinery that is involved in protein transport from early endosomes to either recycling endosomes or the trans-Golgi network. The protein is EARP-interacting protein homolog of Danio rerio (Zebrafish).